The chain runs to 409 residues: Isovaleryl-CoA dehydrogenase, mitochondrial (409 aa).

A mitochondrion-targeting transit peptide spans 1–22 (MQRFFSARSILGYAVKTRRRSF). FAD-binding positions include 151–160 (LAMSEPNAGS) and 184–186 (WCT). S160 is a substrate binding site. Substrate contacts are provided by residues 206–207 (SK), Y261, and 268–271 (DLER). The Proton acceptor role is filled by E270. FAD is bound by residues R296, Q307, and 364-368 (QCLGG). 391–392 (AG) is a substrate binding site. 393 to 395 (TSE) provides a ligand contact to FAD.

Belongs to the acyl-CoA dehydrogenase family. Homodimer. FAD is required as a cofactor. In terms of tissue distribution, expressed in leaves, stems and flowers. Not detected in roots.

It is found in the mitochondrion. It carries out the reaction 3-methylbutanoyl-CoA + oxidized [electron-transfer flavoprotein] + H(+) = 3-methylbut-2-enoyl-CoA + reduced [electron-transfer flavoprotein]. It functions in the pathway amino-acid degradation; L-leucine degradation; (S)-3-hydroxy-3-methylglutaryl-CoA from 3-isovaleryl-CoA: step 1/3. In terms of biological role, involved in degradation of the branched-chain amino acids, phytol and lysine for the supply of carbon and electrons to the ETF/ETFQO complex during dark-induced sugar starvation. This Arabidopsis thaliana (Mouse-ear cress) protein is Isovaleryl-CoA dehydrogenase, mitochondrial (IVD).